The following is a 143-amino-acid chain: MQHRGFLLLTLLALLALTSAVAKKKDKVKKGGPGSECAEWAWGPCTPSSKDCGVGFREGTCGAQTQRIRCRVPCNWKKEFGADCKYKFENWGACDGGTGTKVRQGTLKKARYNAQCQETIRVTKPCTPKTKAKAKAKKGKGKD.

Positions 1 to 20 are cleaved as a signal peptide; sequence MQHRGFLLLTLLALLALTSA. Disulfide bonds link cysteine 37–cysteine 61, cysteine 45–cysteine 70, cysteine 52–cysteine 74, cysteine 84–cysteine 116, and cysteine 94–cysteine 126.

The protein belongs to the pleiotrophin family. As to quaternary structure, homodimer. Interacts with ALK. Interacts with LRP1; promotes neuronal survival. Interacts with LRP2. Interacts with NCAM1. Interacts (via C-terminal) with PTPRZ1 (via chondroitin sulfate chains); this interaction is inhibited by PTN; this interaction promotes neuronal migration. Interacts with NCL; this interaction promotes NCL clustering and lateral movements of this complex into lipid rafts leading to MDK internalization. Interacts with LRP6 and LRP8: this interaction is calcium dependent. Interacts with ITGA4. Interacts with ITGA6. Interacts with ITGB1. Interacts with ITGA4:ITGB1 complex; this interaction mediates MDK-induced osteoblast cells migration through PXN phosphorylation. Interacts with ITGA6:ITGB1 complex; this interaction mediates MDK-induced neurite outgrowth. Interacts with NOTCH2; this interaction mediates a nuclear accumulation of NOTCH2 and therefore activation of NOTCH2 signaling leading to interaction between HES1 and STAT3. Interacts with GPC2 (via heparan sulfate chain); this interaction is inhibited by heparin followed by chondroitin sulfate E; this interaction induces GPC2 clustering through heparan sulfate chain; this interaction induces neuronal cell adhesion and neurite outgrowth. Interacts with SDC3; this interaction induces SDC3 clustering; this interaction induces neuronal cell adhesion and neurite outgrowth. Interacts with SDC1. Interacts with CSPG5; this interaction promotes elongation of oligodendroglial precursor-like cells. Expressed in various tumor cell lines. In insulinoma tissue predominantly expressed in precancerous lesions.

The protein localises to the secreted. Functionally, secreted protein that functions as a cytokine and growth factor and mediates its signal through cell-surface proteoglycan and non-proteoglycan receptors. Binds cell-surface proteoglycan receptors via their chondroitin sulfate (CS) groups. Thereby regulates many processes like inflammatory response, cell proliferation, cell adhesion, cell growth, cell survival, tissue regeneration, cell differentiation and cell migration. Participates in inflammatory processes by exerting two different activities. Firstly, mediates neutrophils and macrophages recruitment to the sites of inflammation both by direct action by cooperating namely with ITGB2 via LRP1 and by inducing chemokine expression. This inflammation can be accompanied by epithelial cell survival and smooth muscle cell migration after renal and vessel damage, respectively. Secondly, suppresses the development of tolerogenic dendric cells thereby inhibiting the differentiation of regulatory T cells and also promote T cell expansion through NFAT signaling and Th1 cell differentiation. Promotes tissue regeneration after injury or trauma. After heart damage negatively regulates the recruitment of inflammatory cells and mediates cell survival through activation of anti-apoptotic signaling pathways via MAPKs and AKT pathways through the activation of angiogenesis. Also facilitates liver regeneration as well as bone repair by recruiting macrophage at trauma site and by promoting cartilage development by facilitating chondrocyte differentiation. Plays a role in brain by promoting neural precursor cells survival and growth through interaction with heparan sulfate proteoglycans. Binds PTPRZ1 and promotes neuronal migration and embryonic neurons survival. Binds SDC3 or GPC2 and mediates neurite outgrowth and cell adhesion. Binds chondroitin sulfate E and heparin leading to inhibition of neuronal cell adhesion induced by binding with GPC2. Binds CSPG5 and promotes elongation of oligodendroglial precursor-like cells. Also binds ITGA6:ITGB1 complex; this interaction mediates MDK-induced neurite outgrowth. Binds LRP1; promotes neuronal survival. Binds ITGA4:ITGB1 complex; this interaction mediates MDK-induced osteoblast cells migration through PXN phosphorylation. Binds anaplastic lymphoma kinase (ALK) which induces ALK activation and subsequent phosphorylation of the insulin receptor substrate (IRS1), followed by the activation of mitogen-activated protein kinase (MAPK) and PI3-kinase, and the induction of cell proliferation. Promotes epithelial to mesenchymal transition through interaction with NOTCH2. During arteriogenesis, plays a role in vascular endothelial cell proliferation by inducing VEGFA expression and release which in turn induces nitric oxide synthase expression. Moreover activates vasodilation through nitric oxide synthase activation. Negatively regulates bone formation in response to mechanical load by inhibiting Wnt/beta-catenin signaling in osteoblasts. In addition plays a role in hippocampal development, working memory, auditory response, early fetal adrenal gland development and the female reproductive system. The polypeptide is Midkine (Homo sapiens (Human)).